Reading from the N-terminus, the 312-residue chain is Ribosomal protein L11 methyltransferase (312 aa).

Positions 162, 183, 205, and 248 each coordinate S-adenosyl-L-methionine.

It belongs to the methyltransferase superfamily. PrmA family.

Its subcellular location is the cytoplasm. It catalyses the reaction L-lysyl-[protein] + 3 S-adenosyl-L-methionine = N(6),N(6),N(6)-trimethyl-L-lysyl-[protein] + 3 S-adenosyl-L-homocysteine + 3 H(+). Functionally, methylates ribosomal protein L11. This is Ribosomal protein L11 methyltransferase from Anoxybacillus flavithermus (strain DSM 21510 / WK1).